Here is a 64-residue protein sequence, read N- to C-terminus: Large ribosomal subunit protein bL35 (64 aa).

A disordered region spans residues 20–42 (GRVKREKMYGSHNLEKKNRKRTR). The span at 25–35 (EKMYGSHNLEK) shows a compositional bias: basic and acidic residues.

Belongs to the bacterial ribosomal protein bL35 family.

In Chlorobium phaeobacteroides (strain BS1), this protein is Large ribosomal subunit protein bL35.